Consider the following 84-residue polypeptide: Exodeoxyribonuclease 7 small subunit (84 aa).

This sequence belongs to the XseB family. In terms of assembly, heterooligomer composed of large and small subunits.

It is found in the cytoplasm. It catalyses the reaction Exonucleolytic cleavage in either 5'- to 3'- or 3'- to 5'-direction to yield nucleoside 5'-phosphates.. Bidirectionally degrades single-stranded DNA into large acid-insoluble oligonucleotides, which are then degraded further into small acid-soluble oligonucleotides. This chain is Exodeoxyribonuclease 7 small subunit, found in Yersinia pseudotuberculosis serotype O:3 (strain YPIII).